The primary structure comprises 442 residues: Adenylosuccinate synthetase (442 aa).

GTP is bound by residues 30 to 36 (GDEGKGK) and 58 to 60 (GHT). The active-site Proton acceptor is the Asp-31. Residues Asp-31 and Gly-58 each contribute to the Mg(2+) site. Residues 31-34 (DEGK), 56-59 (NAGH), Thr-148, Arg-162, Asn-241, Thr-256, and Arg-320 each bind IMP. The active-site Proton donor is His-59. Substrate is bound at residue 316–322 (TTTGRRR). GTP-binding positions include Arg-322, 348-350 (KLD), and 430-432 (GVG).

Belongs to the adenylosuccinate synthetase family. As to quaternary structure, homodimer. It depends on Mg(2+) as a cofactor.

The protein resides in the cytoplasm. The enzyme catalyses IMP + L-aspartate + GTP = N(6)-(1,2-dicarboxyethyl)-AMP + GDP + phosphate + 2 H(+). The protein operates within purine metabolism; AMP biosynthesis via de novo pathway; AMP from IMP: step 1/2. Plays an important role in the de novo pathway and in the salvage pathway of purine nucleotide biosynthesis. Catalyzes the first committed step in the biosynthesis of AMP from IMP. This Trichoplax adhaerens (Trichoplax reptans) protein is Adenylosuccinate synthetase.